Consider the following 478-residue polypeptide: Zinc finger and SCAN domain-containing protein 26 (478 aa).

Lys-17 is covalently cross-linked (Glycyl lysine isopeptide (Lys-Gly) (interchain with G-Cter in SUMO2)). One can recognise an SCAN box domain in the interval 51-133; it reads CKQFRQLRYE…VVLEDLQLDL (83 aa). 2 disordered regions span residues 159–181 and 200–226; these read GVQE…KGEE and ESSG…AKPK. 2 stretches are compositionally biased toward basic and acidic residues: residues 164 to 181 and 207 to 226; these read QVRH…KGEE and EPME…AKPK. The C2H2-type 1; degenerate zinc finger occupies 231–253; that stretch reads YKCSEREQRFIQHLDLIEHASTH. C2H2-type zinc fingers lie at residues 282–304, 310–332, 338–360, 366–388, 394–416, 422–444, and 450–472; these read HQCH…QKIH, YQCN…LRIH, YLCI…QRIH, CECK…QRIH, HQCN…HRIH, FKCN…VRIH, and YQCS…QRYH.

It is found in the nucleus. Functionally, may be involved in transcriptional regulation. This Homo sapiens (Human) protein is Zinc finger and SCAN domain-containing protein 26 (ZSCAN26).